Here is a 356-residue protein sequence, read N- to C-terminus: Heat-inducible transcription repressor HrcA (356 aa).

Belongs to the HrcA family.

Functionally, negative regulator of class I heat shock genes (grpE-dnaK-dnaJ and groELS operons). Prevents heat-shock induction of these operons. This chain is Heat-inducible transcription repressor HrcA, found in Bartonella quintana (strain Toulouse) (Rochalimaea quintana).